We begin with the raw amino-acid sequence, 223 residues long: Sigma non-opioid intracellular receptor 1 (223 aa).

Topologically, residues 1–9 (MQWAVGRRW) are lumenal. The segment at 2–8 (QWAVGRR) is targeting to endoplasmic reticulum-associated lipid droplets. The helical transmembrane segment at 10–30 (LWVALFLAAVAVLTQIVWLWL) threads the bilayer. Residues 31-223 (GTQNFVFQRE…LTTYLFGQDP (193 aa)) lie on the Cytoplasmic side of the membrane. Residues 99–106 (SLSEYVLL) are important for ligand-binding. The tract at residues 177–223 (VIPSTLGFALADTVFSTQDFLTLFYTLRVYARALQLELTTYLFGQDP) is C-terminal hydrophobic region.

It belongs to the ERG2 family. In terms of assembly, homotrimer. Forms a ternary complex with ANK2 and ITPR3. The complex is disrupted by agonists. Interacts with KCNA4. Interacts with KCNA2; cocaine consumption leads to increased interaction. Interacts with RNF112 in an oxidative stress-regulated manner. In terms of tissue distribution, ubiquitously expressed with higher expression in liver, kidney and steroid-producing tissues such as placenta, ovary and adrenal gland.

The protein resides in the nucleus inner membrane. It localises to the nucleus outer membrane. It is found in the nucleus envelope. The protein localises to the cytoplasmic vesicle. Its subcellular location is the endoplasmic reticulum membrane. The protein resides in the membrane. It localises to the lipid droplet. It is found in the cell junction. The protein localises to the cell membrane. Its subcellular location is the cell projection. The protein resides in the growth cone. It localises to the postsynaptic density membrane. Functions in lipid transport from the endoplasmic reticulum and is involved in a wide array of cellular functions probably through regulation of the biogenesis of lipid microdomains at the plasma membrane. Involved in the regulation of different receptors it plays a role in BDNF signaling and EGF signaling. Also regulates ion channels like the potassium channel and could modulate neurotransmitter release. Plays a role in calcium signaling through modulation together with ANK2 of the ITP3R-dependent calcium efflux at the endoplasmic reticulum. Plays a role in several other cell functions including proliferation, survival and death. Originally identified for its ability to bind various psychoactive drugs it is involved in learning processes, memory and mood alteration. Necessary for proper mitochondrial axonal transport in motor neurons, in particular the retrograde movement of mitochondria. Plays a role in protecting cells against oxidative stress-induced cell death via its interaction with RNF112. The polypeptide is Sigma non-opioid intracellular receptor 1 (SIGMAR1) (Cavia porcellus (Guinea pig)).